A 494-amino-acid polypeptide reads, in one-letter code: Ceramide glucosyltransferase (494 aa).

Residues 1–6 lie on the Lumenal side of the membrane; the sequence is MPLLMD. A helical membrane pass occupies residues 7-27; the sequence is GLAYAGAIWSLIVFCVQAIGL. Topologically, residues 28 to 337 are cytoplasmic; sequence YQLFRSYSRP…VRWLRVRKWT (310 aa). Residue aspartate 95 is a short sequence motif, D1. Position 160 (aspartate 160) is a short sequence motif, D2. A short sequence motif (D3) is located at residue aspartate 285. Aspartate 285 serves as the catalytic Proton acceptor. The (Q/R)XXRW motif lies at 326–330; the sequence is RRVRW. The chain crosses the membrane as a helical span at residues 338–358; the sequence is VLLATLVEPGVESMVCCMAFA. At 359 to 380 the chain is on the lumenal side; that stretch reads HALTTTPWCPNPADWPIPHTWT. A helical transmembrane segment spans residues 381-401; it reads ALWSIWLAAIAVWATLDYVVY. Topologically, residues 402-428 are cytoplasmic; that stretch reads HFLHSCRSIEKDADSPDFAQGNELMKR. A helical transmembrane segment spans residues 429-449; that stretch reads PFGAWILAWIGREILALPIWT. Residues 450 to 494 are Lumenal-facing; sequence RAVLLGTTVTWRGTKFKVRPDQSVVDIPNAGAKSNGIGSTNRKVR.

Belongs to the glycosyltransferase 2 family.

Its subcellular location is the golgi apparatus membrane. The enzyme catalyses an N-acylsphing-4-enine + UDP-alpha-D-glucose = a beta-D-glucosyl-(1&lt;-&gt;1')-N-acylsphing-4-enine + UDP + H(+). It participates in lipid metabolism; sphingolipid metabolism. Functionally, catalyzes the final step in the biosynthesis of the membrane lipid glucosylceramide (GluCer), the transfer of glucose to ceramide. Glucosylceramides play important roles in growth, differentiation and pathogenicity. The chain is Ceramide glucosyltransferase from Pyricularia oryzae (strain 70-15 / ATCC MYA-4617 / FGSC 8958) (Rice blast fungus).